The sequence spans 250 residues: NAD-dependent protein deacylase (250 aa).

A Deacetylase sirtuin-type domain is found at 1-250; it reads MIVEVARVLA…VVHEVRRLLQ (250 aa). 20-39 serves as a coordination point for NAD(+); sequence GAGISAESGVPTFRGKDGLW. Substrate contacts are provided by Y64 and R67. An NAD(+)-binding site is contributed by 98–101; the sequence is QNVD. H116 functions as the Proton acceptor in the catalytic mechanism. Residues C124, C127, C150, and C153 each coordinate Zn(2+). NAD(+) is bound by residues 190 to 192, 216 to 218, and A234; these read GTS and NVE.

This sequence belongs to the sirtuin family. Class III subfamily. Zn(2+) is required as a cofactor.

It localises to the cytoplasm. It carries out the reaction N(6)-acetyl-L-lysyl-[protein] + NAD(+) + H2O = 2''-O-acetyl-ADP-D-ribose + nicotinamide + L-lysyl-[protein]. It catalyses the reaction N(6)-succinyl-L-lysyl-[protein] + NAD(+) + H2O = 2''-O-succinyl-ADP-D-ribose + nicotinamide + L-lysyl-[protein]. Functionally, NAD-dependent lysine deacetylase and desuccinylase that specifically removes acetyl and succinyl groups on target proteins. Modulates the activities of several proteins which are inactive in their acylated form. Deacetylates the N-terminal lysine residue of Alba, the major archaeal chromatin protein and that, in turn, increases Alba's DNA binding affinity, thereby repressing transcription. The chain is NAD-dependent protein deacylase from Pyrococcus abyssi (strain GE5 / Orsay).